The primary structure comprises 1414 residues: Calcium-transporting ATPase 2 (1414 aa).

Disordered regions lie at residues 1–231 (MSRN…PSRL) and 265–294 (AVGT…QWRA). The Cytoplasmic segment spans residues 1–327 (MSRNNPPPVI…LLMWLAFKDK (327 aa)). Low complexity-rich tracts occupy residues 33-53 (PTPT…PESP) and 75-96 (SPTP…SSSS). A compositionally biased stretch (basic and acidic residues) spans 179–189 (DGDRGEDDANK). Residues 190–201 (KGKKDKKGKKGK) are compositionally biased toward basic residues. A compositionally biased stretch (basic and acidic residues) spans 202 to 229 (KDKEEPPSAHLDPDKDKTDPTPFREKPS). The helical transmembrane segment at 328-348 (VLILLSVAAVVSLALGLYQDL) threads the bilayer. Over 349–370 (GTPPKIIYNDECPDGCEEAQVD) the chain is Vacuolar. A helical membrane pass occupies residues 371–391 (WVEGVAIVVAIIIVVLVGSIN). Over 392-541 (DWQKERQFKK…TPLQIKLNHL (150 aa)) the chain is Cytoplasmic. A helical transmembrane segment spans residues 542-562 (AELIAKLGGASGLLLFIALMI). At 563-585 (RFFVQLKTNPDRSANDKAQSFIQ) the chain is on the vacuolar side. A helical membrane pass occupies residues 586–606 (ILIIAVTLVVVAVPEGLPLAV). The Ca(2+) site is built by Val595 and Glu600. The Cytoplasmic portion of the chain corresponds to 607–1040 (TLALAFATKR…GRCVNDSVKK (434 aa)). Asp642 acts as the 4-aspartylphosphate intermediate in catalysis. Positions 642 and 644 each coordinate Mg(2+). ATP contacts are provided by residues Thr644, Glu737, Arg779, 909 to 911 (TGD), Arg958, and Lys964. Asp983 is a Mg(2+) binding site. Residue Asn986 participates in ATP binding. The chain crosses the membrane as a helical span at residues 1041 to 1061 (FLQFQISVNITAVFITFISAV). Asn1049 is a Ca(2+) binding site. The Vacuolar segment spans residues 1062 to 1068 (ASSSEES). Residues 1069–1089 (VLTAVQLLWVNLIMDTFAALA) form a helical membrane-spanning segment. Residues Asn1079 and Asp1083 each contribute to the Ca(2+) site. The Cytoplasmic portion of the chain corresponds to 1090–1118 (LATDPATESSLDRKPDRKNAPLITVEMFK). Residues 1119-1139 (MIMVQAIYQIIVCLVLHFAGL) traverse the membrane as a helical segment. The Vacuolar segment spans residues 1140–1153 (KILGLEDNDQNNTE). The helical transmembrane segment at 1154-1171 (LGALVFNCFVFCQIFNQL) threads the bilayer. The Cytoplasmic segment spans residues 1172–1191 (NCRRLDRKLNVLEGFWRNWY). A helical transmembrane segment spans residues 1192–1212 (FIIIFLIMVGGQILIVEVGGA). Glu1208 is a Ca(2+) binding site. The Vacuolar segment spans residues 1213–1223 (AFQVTRLGGRD). A helical membrane pass occupies residues 1224-1244 (WGITLVIGALSLPIGALVRLT). At 1245–1414 (PTGPFARLLV…GLSSGDANNV (170 aa)) the chain is on the cytoplasmic side. Residues 1376–1414 (PRTNPDDPLYAKFGLQPPESRGSSVSGAEGLSSGDANNV) are disordered.

This sequence belongs to the cation transport ATPase (P-type) (TC 3.A.3) family.

It localises to the vacuole membrane. The catalysed reaction is Ca(2+)(in) + ATP + H2O = Ca(2+)(out) + ADP + phosphate + H(+). In terms of biological role, this magnesium-dependent enzyme catalyzes the hydrolysis of ATP coupled with the transport of calcium. Transports calcium to the vacuole and participates in the control of cytosolic free calcium. In Cryptococcus neoformans var. grubii serotype A (strain H99 / ATCC 208821 / CBS 10515 / FGSC 9487) (Filobasidiella neoformans var. grubii), this protein is Calcium-transporting ATPase 2.